Consider the following 419-residue polypeptide: UDP-N-acetylglucosamine 1-carboxyvinyltransferase (419 aa).

A phosphoenolpyruvate-binding site is contributed by Lys23–Asn24. Residue Arg92 coordinates UDP-N-acetyl-alpha-D-glucosamine. Cys116 (proton donor) is an active-site residue. The residue at position 116 (Cys116) is a 2-(S-cysteinyl)pyruvic acid O-phosphothioketal. Residues Arg121–Leu125, Lys161–Val164, Asp306, and Ile328 contribute to the UDP-N-acetyl-alpha-D-glucosamine site.

Belongs to the EPSP synthase family. MurA subfamily.

The protein localises to the cytoplasm. The catalysed reaction is phosphoenolpyruvate + UDP-N-acetyl-alpha-D-glucosamine = UDP-N-acetyl-3-O-(1-carboxyvinyl)-alpha-D-glucosamine + phosphate. The protein operates within cell wall biogenesis; peptidoglycan biosynthesis. In terms of biological role, cell wall formation. Adds enolpyruvyl to UDP-N-acetylglucosamine. In Vibrio cholerae serotype O1 (strain ATCC 39541 / Classical Ogawa 395 / O395), this protein is UDP-N-acetylglucosamine 1-carboxyvinyltransferase.